Here is a 74-residue protein sequence, read N- to C-terminus: Complement C5a anaphylatoxin (74 aa).

Residues 15-44 (YAMLKKCCYDGAYRNDDETCEERAARIKIG) form an involved in C5AR1 binding region. 3 disulfides stabilise this stretch: Cys21–Cys47, Cys22–Cys54, and Cys34–Cys55. In terms of domain architecture, Anaphylatoxin-like spans 21 to 55 (CCYDGAYRNDDETCEERAARIKIGPKCVKAFKDCC). The interval 72-74 (LGR) is required for 90% of C5a activity; although Arg-74 is not essential.

The protein resides in the secreted. Functionally, mediator of local inflammatory process released following cleavage by C5 convertase. Acts by binding to its receptor (C5AR1 or C5AR2), activating G protein-coupled receptor signaling and inducing a variety of responses including intracellular calcium release, contraction of smooth muscle, increased vascular permeability, and histamine release from mast cells and basophilic leukocytes. C5a is also a potent chemokine which stimulates the locomotion of polymorphonuclear leukocytes and directs their migration toward sites of inflammation. This is Complement C5a anaphylatoxin (C5) from Sus scrofa (Pig).